Reading from the N-terminus, the 558-residue chain is Potassium-transporting ATPase potassium-binding subunit 1 (558 aa).

A run of 12 helical transmembrane segments spans residues 1 to 21 (MEIILFLTMMVMIAYVFSGYL), 66 to 86 (FNGFMGVITFVLLIVQQWLFL), 127 to 147 (MIVMTYLMFTSSASGYAVCIA), 166 to 186 (IVRFIVRVLLPLSCLISILLM), 245 to 265 (IWSNFIEMGSMMLLPMSMLFL), 281 to 301 (ALILFVAMFFIFIAILTLTMW), 327 to 347 (FGAGLSALFTVITTAFTTGSV), 354 to 374 (LTPLGGLGPMVLMMLNVVFGG), 377 to 397 (VGLMNLLIYVLLTLFICSLMV), 416 to 436 (IVLVFLIHPILILVFSALAFM), 482 to 502 (ISTGIIMLLSRYIPIILQLMI), and 531 to 551 (IVFIVLLSGLTFIPVLLLGPI).

Belongs to the KdpA family. The system is composed of three essential subunits: KdpA, KdpB and KdpC.

Its subcellular location is the cell membrane. Its function is as follows. Part of the high-affinity ATP-driven potassium transport (or Kdp) system, which catalyzes the hydrolysis of ATP coupled with the electrogenic transport of potassium into the cytoplasm. This subunit binds the extracellular potassium ions and delivers the ions to the membrane domain of KdpB through an intramembrane tunnel. The sequence is that of Potassium-transporting ATPase potassium-binding subunit 1 from Staphylococcus aureus (strain MRSA252).